The primary structure comprises 204 residues: Glycerol-3-phosphate acyltransferase (204 aa).

5 helical membrane-spanning segments follow: residues 8–28 (MLVF…CYIF), 53–73 (VPAI…VVLA), 81–101 (FITA…IFFG), 116–136 (FGFS…VAVI), and 155–175 (VIFT…IIIL).

It belongs to the PlsY family. In terms of assembly, probably interacts with PlsX.

It is found in the cell inner membrane. It carries out the reaction an acyl phosphate + sn-glycerol 3-phosphate = a 1-acyl-sn-glycero-3-phosphate + phosphate. It functions in the pathway lipid metabolism; phospholipid metabolism. Catalyzes the transfer of an acyl group from acyl-phosphate (acyl-PO(4)) to glycerol-3-phosphate (G3P) to form lysophosphatidic acid (LPA). This enzyme utilizes acyl-phosphate as fatty acyl donor, but not acyl-CoA or acyl-ACP. In Francisella philomiragia subsp. philomiragia (strain ATCC 25017 / CCUG 19701 / FSC 153 / O#319-036), this protein is Glycerol-3-phosphate acyltransferase.